The sequence spans 615 residues: Chaperone protein DnaK (615 aa).

Residue threonine 195 is modified to Phosphothreonine; by autocatalysis. Residues 592–615 (EKGAQAASGKGPDDVIDADYKPAD) are disordered.

This sequence belongs to the heat shock protein 70 family.

Functionally, acts as a chaperone. The polypeptide is Chaperone protein DnaK (Thermus thermophilus (strain ATCC BAA-163 / DSM 7039 / HB27)).